The sequence spans 266 residues: Urease accessory protein UreD (266 aa).

It belongs to the UreD family. In terms of assembly, ureD, UreF and UreG form a complex that acts as a GTP-hydrolysis-dependent molecular chaperone, activating the urease apoprotein by helping to assemble the nickel containing metallocenter of UreC. The UreE protein probably delivers the nickel.

The protein localises to the cytoplasm. Required for maturation of urease via the functional incorporation of the urease nickel metallocenter. The polypeptide is Urease accessory protein UreD (Jannaschia sp. (strain CCS1)).